Reading from the N-terminus, the 480-residue chain is ATP synthase subunit beta, chloroplastic (480 aa).

Residue 161 to 168 participates in ATP binding; it reads GGAGVGKT.

Belongs to the ATPase alpha/beta chains family. F-type ATPases have 2 components, CF(1) - the catalytic core - and CF(0) - the membrane proton channel. CF(1) has five subunits: alpha(3), beta(3), gamma(1), delta(1), epsilon(1). CF(0) has four main subunits: a(1), b(1), b'(1) and c(9-12).

The protein localises to the plastid. It localises to the chloroplast thylakoid membrane. It carries out the reaction ATP + H2O + 4 H(+)(in) = ADP + phosphate + 5 H(+)(out). Functionally, produces ATP from ADP in the presence of a proton gradient across the membrane. The catalytic sites are hosted primarily by the beta subunits. This Euglena gracilis protein is ATP synthase subunit beta, chloroplastic.